The primary structure comprises 177 residues: Peptidoglycan-associated lipoprotein (177 aa).

The N-terminal stretch at 1-32 is a signal peptide; sequence MSRTNISALSPMQKLARNPAVIAMTLALALAG. A lipid anchor (N-palmitoyl cysteine) is attached at Cys-33. Residue Cys-33 is the site of S-diacylglycerol cysteine attachment. The region spanning 59–176 is the OmpA-like domain; the sequence is QQDFTVNVGD…RAVTVLGGAG (118 aa).

It belongs to the Pal lipoprotein family. As to quaternary structure, the Tol-Pal system is composed of five core proteins: the inner membrane proteins TolA, TolQ and TolR, the periplasmic protein TolB and the outer membrane protein Pal. They form a network linking the inner and outer membranes and the peptidoglycan layer.

Its subcellular location is the cell outer membrane. Its function is as follows. Part of the Tol-Pal system, which plays a role in outer membrane invagination during cell division and is important for maintaining outer membrane integrity. The polypeptide is Peptidoglycan-associated lipoprotein (Agrobacterium fabrum (strain C58 / ATCC 33970) (Agrobacterium tumefaciens (strain C58))).